We begin with the raw amino-acid sequence, 466 residues long: Histone acetyltransferase type B catalytic subunit DDB_G0275159 (466 aa).

Residues 169–366 (AVFRYHEKLQ…FRIAIKKRLY (198 aa)) enclose the N-acetyltransferase domain. Residues 240–242 (YLI) and 247–253 (QRMGHGK) contribute to the acetyl-CoA site. Residue glutamate 279 is the Proton donor/acceptor of the active site. The stretch at 372 to 459 (DSEQIEKMKQ…LEENYHKTLS (88 aa)) forms a coiled coil.

This sequence belongs to the HAT1 family.

It catalyses the reaction L-lysyl-[protein] + acetyl-CoA = N(6)-acetyl-L-lysyl-[protein] + CoA + H(+). The polypeptide is Histone acetyltransferase type B catalytic subunit DDB_G0275159 (Dictyostelium discoideum (Social amoeba)).